Reading from the N-terminus, the 713-residue chain is MFNKVVKEFQWGQHKVRLETGEVARQASGAVIVDVEDTVVLATVVGAKSAKPGQDFFPLTVDYLEKTYSAGKIPGGFFRREGRPSEHETLTSRLIDRPLRPLFPEGFYNEVQVVIHVLSVNPEIPADIPALIGASAALAVSGLPFNGPVGAARVAYIDNAYVLNPTRDQIKASSLDLVVAGTERAVLMVESEADQLSEDVMLGAVVFGHEQMQIAIDAIHELVRDGGKPEWDWQPAPKNEALIARVTELAQNDLLAAYQLRDKQARSAKLKEVYAATSAKLEEDALAAGTVAADKATVGNILFDIEAKIVRSQILNGEPRIDGRDTRTVRPIEIRTGVLPRTHGSALFTRGETQALVVATLGTKGDEQIIDALEGEYRERFMLHYNMPPFATGETGRVGSPKRREIGHGRLAKRALVKCLPSADEFGYSIRVVSEITESNGSSSMASVCGGCLALMDAGVPMKAHVAGIAMGLILEGNKFAVLTDILGDEDHLGDMDFKVAGTEQGVTALQMDIKIQGITKEIMQVALAQAKEGRMHILGKMTSAVSGANTQLSEFAPRMITIKINPEKIRDVIGKGGSVIRALTEETGTTIDISDDGVVTIASTSSDGMAEAKKRIEQITAEIEVGQVYEGTVLKLLDFGAIVNLLPGKDGLLHISEIVNERVKDINDYLKEGQQVKVKVIQTDEKGRVRLSAKALLNEAAAAAQSDTPPQQ.

Positions 491 and 497 each coordinate Mg(2+). The region spanning 558 to 617 (PRMITIKINPEKIRDVIGKGGSVIRALTEETGTTIDISDDGVVTIASTSSDGMAEAKKRI) is the KH domain. Residues 627–695 (GQVYEGTVLK…EKGRVRLSAK (69 aa)) enclose the S1 motif domain.

It belongs to the polyribonucleotide nucleotidyltransferase family. Requires Mg(2+) as cofactor.

It localises to the cytoplasm. The catalysed reaction is RNA(n+1) + phosphate = RNA(n) + a ribonucleoside 5'-diphosphate. Involved in mRNA degradation. Catalyzes the phosphorolysis of single-stranded polyribonucleotides processively in the 3'- to 5'-direction. In Burkholderia cenocepacia (strain ATCC BAA-245 / DSM 16553 / LMG 16656 / NCTC 13227 / J2315 / CF5610) (Burkholderia cepacia (strain J2315)), this protein is Polyribonucleotide nucleotidyltransferase.